The following is a 145-amino-acid chain: Small ribosomal subunit protein uS15 (145 aa).

This sequence belongs to the universal ribosomal protein uS15 family. In terms of assembly, part of the 30S ribosomal subunit.

The sequence is that of Small ribosomal subunit protein uS15 from Thermoplasma acidophilum (strain ATCC 25905 / DSM 1728 / JCM 9062 / NBRC 15155 / AMRC-C165).